The following is a 560-amino-acid chain: Nuclear receptor subfamily 5 group A member 2 (560 aa).

The interval 21–55 (IASAPGSETRHSPKREEQLREKRAGLPDRHRRPIP) is disordered. A compositionally biased stretch (basic and acidic residues) spans 28–48 (ETRHSPKREEQLREKRAGLPD). A DNA-binding region (nuclear receptor) is located at residues 104–175 (EELCPVCGDK…KCIDVGMKLE (72 aa)). Residues cysteine 107, cysteine 110, cysteine 124, cysteine 127, cysteine 143, cysteine 149, cysteine 159, and cysteine 162 each contribute to the Zn(2+) site. 2 consecutive NR C4-type zinc fingers follow at residues 107–127 (CPVCGDKVSGYHYGLLTCESC) and 143–167 (CIENQNCQIDKTQRKRCPYCRFKKC). A C-terminal extension (CTE) region spans residues 173 to 188 (KLEAVRADRMRGGRNK). The short motif at 189–208 (FGPMYKRDRALKQQKKALIR) is the FTZ-F1 box element. A Glycyl lysine isopeptide (Lys-Gly) (interchain with G-Cter in SUMO1) cross-link involves residue lysine 289. Residues 319-558 (SIPHLILELL…NLLIEMLHAK (240 aa)) enclose the NR LBD domain. Positions 535 and 539 each coordinate a phospholipid derivative. Positions 547-558 (YNNLLIEMLHAK) are AF-2.

It belongs to the nuclear hormone receptor family. NR5 subfamily. In terms of assembly, monomer; Binds DNA as a monomer. Interacts with nuclear receptor corepressors NR0B1 and NR0B2; repressing NR5A2 nuclear receptor activity. Interacts with nuclear receptor coactivators CTNNB1, PPARGC1A and NCOA2; interaction takes place following ligand-binding and promotes target gene activation. Interacts (when sumoylated) with GPS2; interaction with GPS2 onto hepatic acute phase protein promoters prevents N-Cor corepressor complex dissociation. Interacts with HNF1A. Interacts with GRIP1. Post-translationally, sumoylated by SUMO1 at Lys-289 during the hepatic acute phase response, leading to promote interaction with GPS2 and prevent N-Cor corepressor complex dissociation.

It localises to the nucleus. Its subcellular location is the chromosome. Orphan nuclear receptor that binds DNA as a monomer to the 5'-TCAAGGCCA-3' sequence and controls expression of target genes: regulates key biological processes, such as early embryonic development, cholesterol and bile acid synthesis pathways, as well as liver and pancreas morphogenesis. Ligand-binding causes conformational change which causes recruitment of coactivators, promoting target gene activation. The specific ligand is unknown, but specific phospholipids, such as phosphatidylethanolamine, phosphatidylserine, dilauroyl phosphatidylcholine and diundecanoyl phosphatidylcholine can act as ligand in vitro. Acts as a pioneer transcription factor, which unwraps target DNA from histones and elicits local opening of closed chromatin. Plays a central role during preimplantation stages of embryonic development. Plays a minor role in zygotic genome activation (ZGA) by regulating a small set of two-cell stage genes. Plays a major role in morula development (2-16 cells embryos) by acting as a master regulator at the 8-cell stage, controlling expression of lineage-specifying transcription factors and genes involved in mitosis, telomere maintenance and DNA repair. Zygotic NR5A2 binds to both closed and open chromatin with other transcription factors, often at SINE B1/Alu repeats DNA elements, promoting chromatin accessibility at nearby regulatory regions. Also involved in the epiblast stage of development and embryonic stem cell pluripotency, by promoting expression of POU5F1/OCT4. Regulates other processes later in development, such as formation of connective tissue in lower jaw and middle ear, neural stem cell differentiation, ovarian follicle development and Sertoli cell differentiation. Involved in exocrine pancreas development and acinar cell differentiation. Acts as an essential transcriptional regulator of lipid metabolism. Key regulator of cholesterol 7-alpha-hydroxylase gene (CYP7A) expression in liver. Activates the transcription of CYP2C38. Also acts as a negative regulator of inflammation in different organs, such as intestine, liver and pancreas. Protects against intestinal inflammation via its ability to regulate glucocorticoid production. Plays an anti-inflammatory role during the hepatic acute phase response by acting as a corepressor: inhibits the hepatic acute phase response by preventing dissociation of the N-Cor corepressor complex. Acts as a regulator of immunity by promoting lymphocyte T-cell development, proliferation and effector functions. Also involved in resolution of endoplasmic reticulum stress in the liver. The polypeptide is Nuclear receptor subfamily 5 group A member 2 (Mus musculus (Mouse)).